A 109-amino-acid polypeptide reads, in one-letter code: Ribonuclease P protein component (109 aa).

Belongs to the RnpA family. In terms of assembly, consists of a catalytic RNA component (M1 or rnpB) and a protein subunit.

The enzyme catalyses Endonucleolytic cleavage of RNA, removing 5'-extranucleotides from tRNA precursor.. In terms of biological role, RNaseP catalyzes the removal of the 5'-leader sequence from pre-tRNA to produce the mature 5'-terminus. It can also cleave other RNA substrates such as 4.5S RNA. The protein component plays an auxiliary but essential role in vivo by binding to the 5'-leader sequence and broadening the substrate specificity of the ribozyme. The protein is Ribonuclease P protein component of Mycoplasma mycoides subsp. mycoides SC (strain CCUG 32753 / NCTC 10114 / PG1).